Reading from the N-terminus, the 300-residue chain is U6 snRNA methylphosphate capping enzyme Amus (300 aa).

Over residues methionine 1–threonine 12 the composition is skewed to polar residues. Disordered stretches follow at residues methionine 1–lysine 21 and valine 34–methionine 68. Residues valine 34–serine 44 are compositionally biased toward basic and acidic residues. The 206-residue stretch at aspartate 95 to serine 300 folds into the Bin3-type SAM domain. 2 residues coordinate S-adenosyl-L-methionine: asparagine 119 and aspartate 140.

The protein belongs to the methyltransferase superfamily.

It localises to the nucleus. In terms of biological role, probable S-adenosyl-L-methionine-dependent methyltransferase that binds and stabilizes U6 snRNA, probably by adding a methylphosphate cap at its 5'-end. Required for U6 stability, but not stability of 7SK snRNAs, other miRNAs or tRNAs. U6 stabilization is required for efficient pre-mRNA splicing. Essential for organismal and germline development. This Drosophila melanogaster (Fruit fly) protein is U6 snRNA methylphosphate capping enzyme Amus.